Here is a 409-residue protein sequence, read N- to C-terminus: Elongation factor Tu (409 aa).

The tr-type G domain occupies 10–214; the sequence is KPHVNVGTIG…AVDSYIPTPE (205 aa). Residues 19 to 26 are G1; sequence GHVDHGKT. 19-26 is a GTP binding site; it reads GHVDHGKT. Position 26 (Thr26) interacts with Mg(2+). A G2 region spans residues 60-64; sequence GITIN. A G3 region spans residues 81–84; sequence DCPG. GTP contacts are provided by residues 81–85 and 136–139; these read DCPGH and NKVD. Residues 136–139 are G4; that stretch reads NKVD. The interval 174-176 is G5; sequence SAL.

It belongs to the TRAFAC class translation factor GTPase superfamily. Classic translation factor GTPase family. EF-Tu/EF-1A subfamily. In terms of assembly, monomer.

The protein localises to the cytoplasm. It carries out the reaction GTP + H2O = GDP + phosphate + H(+). In terms of biological role, GTP hydrolase that promotes the GTP-dependent binding of aminoacyl-tRNA to the A-site of ribosomes during protein biosynthesis. The polypeptide is Elongation factor Tu (Synechococcus sp. (strain JA-3-3Ab) (Cyanobacteria bacterium Yellowstone A-Prime)).